The following is a 260-amino-acid chain: uncharacterized protein (260 aa).

The 234-residue stretch at 6–239 (AGVRSGVVVS…VAVAETYLPN (234 aa)) folds into the Radical SAM core domain.

This is an uncharacterized protein from Sinorhizobium fredii (strain NBRC 101917 / NGR234).